The chain runs to 44 residues: Large ribosomal subunit protein bL34 (44 aa).

Basic residues-rich tracts occupy residues 1–22 and 31–44; these read MKRTLGGTSRKRKRTSGFRARM and IRARRKKGRHRLSV. The interval 1–44 is disordered; it reads MKRTLGGTSRKRKRTSGFRARMRTPDGRNVIRARRKKGRHRLSV.

This sequence belongs to the bacterial ribosomal protein bL34 family.

This chain is Large ribosomal subunit protein bL34, found in Nostoc punctiforme (strain ATCC 29133 / PCC 73102).